The primary structure comprises 370 residues: Pyruvate dehydrogenase E1 component subunit alpha (370 aa).

Heterodimer of an alpha and a beta chain. The cofactor is thiamine diphosphate.

The enzyme catalyses N(6)-[(R)-lipoyl]-L-lysyl-[protein] + pyruvate + H(+) = N(6)-[(R)-S(8)-acetyldihydrolipoyl]-L-lysyl-[protein] + CO2. In terms of biological role, the pyruvate dehydrogenase complex catalyzes the overall conversion of pyruvate to acetyl-CoA and CO(2). It contains multiple copies of three enzymatic components: pyruvate dehydrogenase (E1), dihydrolipoamide acetyltransferase (E2) and lipoamide dehydrogenase (E3). The chain is Pyruvate dehydrogenase E1 component subunit alpha (pdhA) from Staphylococcus aureus (strain COL).